Reading from the N-terminus, the 108-residue chain is Insulin (108 aa).

The first 24 residues, 1 to 24, serve as a signal peptide directing secretion; the sequence is MALWMHLLPLLALLALWGPEPAPA. Disulfide bonds link cysteine 31-cysteine 94, cysteine 43-cysteine 107, and cysteine 93-cysteine 98. The propeptide at 57-85 is c peptide; it reads EAEDLQVGQVELGGGSITGSLPPLEGPMQ.

It belongs to the insulin family. Heterodimer of a B chain and an A chain linked by two disulfide bonds.

It localises to the secreted. In terms of biological role, insulin decreases blood glucose concentration. It increases cell permeability to monosaccharides, amino acids and fatty acids. It accelerates glycolysis, the pentose phosphate cycle, and glycogen synthesis in liver. In Aotus trivirgatus (Three-striped night monkey), this protein is Insulin (INS).